The following is a 182-amino-acid chain: Ribosome maturation factor RimM (182 aa).

Positions glutamate 103–phenylalanine 182 constitute a PRC barrel domain.

The protein belongs to the RimM family. In terms of assembly, binds ribosomal protein uS19.

The protein localises to the cytoplasm. An accessory protein needed during the final step in the assembly of 30S ribosomal subunit, possibly for assembly of the head region. Essential for efficient processing of 16S rRNA. May be needed both before and after RbfA during the maturation of 16S rRNA. It has affinity for free ribosomal 30S subunits but not for 70S ribosomes. The protein is Ribosome maturation factor RimM of Yersinia enterocolitica serotype O:8 / biotype 1B (strain NCTC 13174 / 8081).